The chain runs to 306 residues: uncharacterized protein (306 aa).

This sequence to M.jannaschii MJ0658.

This is an uncharacterized protein from Methanothermobacter thermautotrophicus (strain ATCC 29096 / DSM 1053 / JCM 10044 / NBRC 100330 / Delta H) (Methanobacterium thermoautotrophicum).